Here is a 268-residue protein sequence, read N- to C-terminus: MKTRLFNFTKWWLTGFTQADGGFVVNFDARKQGNLPYYPRPSFVLTQNIREEQMMIELHGVGKLYYSRNEINIVVRSQDDITNVIIPHFDNYSLRGHKLSSYFLFKEVVLMMNNGKHLSPFLQILELCYFTNHTTRRTLDTKKAILDKIYNKFGFVQFEPIIESNLSKPNSNPINNDYMVGLVDGDGSFNFGFKSTRRRIVPNFTIVQGVEDRSVLEDVQSYLDCGKVYDLQSQTSRYQVENVTDLVEKVLPEFKENKFNTTKKDYTL.

Belongs to the LAGLIDADG endonuclease family.

Its subcellular location is the mitochondrion. Its function is as follows. Mitochondrial DNA endonuclease involved in intron homing. This Mycosarcoma maydis (Corn smut fungus) protein is Probable intron-encoded DNA endonuclease 1 (hegI1).